Reading from the N-terminus, the 183-residue chain is Holliday junction branch migration complex subunit RuvA (183 aa).

Residues Met-1–Leu-63 form a domain I region. The interval Glu-64 to Asn-141 is domain II. Asn-141 is a region of interest (flexible linker). The tract at residues Asn-141 to Ser-183 is domain III.

It belongs to the RuvA family. As to quaternary structure, homotetramer. Forms an RuvA(8)-RuvB(12)-Holliday junction (HJ) complex. HJ DNA is sandwiched between 2 RuvA tetramers; dsDNA enters through RuvA and exits via RuvB. An RuvB hexamer assembles on each DNA strand where it exits the tetramer. Each RuvB hexamer is contacted by two RuvA subunits (via domain III) on 2 adjacent RuvB subunits; this complex drives branch migration. In the full resolvosome a probable DNA-RuvA(4)-RuvB(12)-RuvC(2) complex forms which resolves the HJ.

The protein localises to the cytoplasm. Functionally, the RuvA-RuvB-RuvC complex processes Holliday junction (HJ) DNA during genetic recombination and DNA repair, while the RuvA-RuvB complex plays an important role in the rescue of blocked DNA replication forks via replication fork reversal (RFR). RuvA specifically binds to HJ cruciform DNA, conferring on it an open structure. The RuvB hexamer acts as an ATP-dependent pump, pulling dsDNA into and through the RuvAB complex. HJ branch migration allows RuvC to scan DNA until it finds its consensus sequence, where it cleaves and resolves the cruciform DNA. This chain is Holliday junction branch migration complex subunit RuvA, found in Helicobacter acinonychis (strain Sheeba).